Reading from the N-terminus, the 691-residue chain is Elongation factor G (691 aa).

One can recognise a tr-type G domain in the interval 8–282 (HMVRNIGIAA…AVVDYLPAPD (275 aa)). GTP contacts are provided by residues 17 to 24 (AHIDAGKT), 81 to 85 (DTPGH), and 135 to 138 (NKMD).

Belongs to the TRAFAC class translation factor GTPase superfamily. Classic translation factor GTPase family. EF-G/EF-2 subfamily.

The protein resides in the cytoplasm. Its function is as follows. Catalyzes the GTP-dependent ribosomal translocation step during translation elongation. During this step, the ribosome changes from the pre-translocational (PRE) to the post-translocational (POST) state as the newly formed A-site-bound peptidyl-tRNA and P-site-bound deacylated tRNA move to the P and E sites, respectively. Catalyzes the coordinated movement of the two tRNA molecules, the mRNA and conformational changes in the ribosome. This is Elongation factor G from Campylobacter hominis (strain ATCC BAA-381 / DSM 21671 / CCUG 45161 / LMG 19568 / NCTC 13146 / CH001A).